The primary structure comprises 166 residues: Large ribosomal subunit protein uL10 (166 aa).

The protein belongs to the universal ribosomal protein uL10 family. Part of the ribosomal stalk of the 50S ribosomal subunit. The N-terminus interacts with L11 and the large rRNA to form the base of the stalk. The C-terminus forms an elongated spine to which L12 dimers bind in a sequential fashion forming a multimeric L10(L12)X complex.

Its function is as follows. Forms part of the ribosomal stalk, playing a central role in the interaction of the ribosome with GTP-bound translation factors. The sequence is that of Large ribosomal subunit protein uL10 (rplJ) from Streptococcus pyogenes serotype M18 (strain MGAS8232).